Here is a 262-residue protein sequence, read N- to C-terminus: Adenosylcobinamide-GDP ribazoletransferase (262 aa).

6 consecutive transmembrane segments (helical) span residues 43-63 (YFGLVGLLVGLLSAIIFWLTQ), 66-86 (LPAGVSVLLSMLTGILLTGGF), 120-140 (GALALIMVLLLKWQLLVELAL), 146-166 (AGSAMIVAHTVSRVVAASLIF), 191-211 (LFILIASGVLVLLVLKGIAAL), and 242-262 (AAQQICEIVCYFVLLVVGGIL).

The protein belongs to the CobS family. Requires Mg(2+) as cofactor.

Its subcellular location is the cell inner membrane. It carries out the reaction alpha-ribazole + adenosylcob(III)inamide-GDP = adenosylcob(III)alamin + GMP + H(+). The catalysed reaction is alpha-ribazole 5'-phosphate + adenosylcob(III)inamide-GDP = adenosylcob(III)alamin 5'-phosphate + GMP + H(+). The protein operates within cofactor biosynthesis; adenosylcobalamin biosynthesis; adenosylcobalamin from cob(II)yrinate a,c-diamide: step 7/7. Its function is as follows. Joins adenosylcobinamide-GDP and alpha-ribazole to generate adenosylcobalamin (Ado-cobalamin). Also synthesizes adenosylcobalamin 5'-phosphate from adenosylcobinamide-GDP and alpha-ribazole 5'-phosphate. This Shewanella oneidensis (strain ATCC 700550 / JCM 31522 / CIP 106686 / LMG 19005 / NCIMB 14063 / MR-1) protein is Adenosylcobinamide-GDP ribazoletransferase.